The sequence spans 503 residues: GMP synthase [glutamine-hydrolyzing] (503 aa).

The Glutamine amidotransferase type-1 domain occupies 1–189 (MVLVLDFGSQ…FLELAGVKRD (189 aa)). Cys-78 (nucleophile) is an active-site residue. Residues His-164 and Glu-166 contribute to the active site. The GMPS ATP-PPase domain occupies 190-378 (WTPEHVLEEL…LGLPDTLRLR (189 aa)). 217–223 (SGGVDSS) is a binding site for ATP.

As to quaternary structure, homodimer.

It catalyses the reaction XMP + L-glutamine + ATP + H2O = GMP + L-glutamate + AMP + diphosphate + 2 H(+). The protein operates within purine metabolism; GMP biosynthesis; GMP from XMP (L-Gln route): step 1/1. Catalyzes the synthesis of GMP from XMP. The polypeptide is GMP synthase [glutamine-hydrolyzing] (Thermus thermophilus (strain ATCC 27634 / DSM 579 / HB8)).